Reading from the N-terminus, the 226-residue chain is SURF1-like protein (226 aa).

The next 2 membrane-spanning stretches (helical) occupy residues 3-23 (TNLVVLITFTILISLGFWQLS) and 199-219 (LEYALTWFGLAISLIVIYVIY).

This sequence belongs to the SURF1 family.

Its subcellular location is the cell membrane. The polypeptide is SURF1-like protein (Rickettsia felis (strain ATCC VR-1525 / URRWXCal2) (Rickettsia azadi)).